A 151-amino-acid chain; its full sequence is Arginine repressor (151 aa).

Belongs to the ArgR family.

The protein resides in the cytoplasm. The protein operates within amino-acid biosynthesis; L-arginine biosynthesis [regulation]. In terms of biological role, regulates arginine biosynthesis genes. The chain is Arginine repressor from Enterococcus faecalis (strain ATCC 700802 / V583).